Here is a 777-residue protein sequence, read N- to C-terminus: Biotin sulfoxide reductase (777 aa).

Position 148 (Ser148) interacts with Mo-bis(molybdopterin guanine dinucleotide).

This sequence belongs to the prokaryotic molybdopterin-containing oxidoreductase family. Mo-bis(molybdopterin guanine dinucleotide) is required as a cofactor.

The enzyme catalyses [thioredoxin]-disulfide + L-methionine + H2O = L-methionine (S)-S-oxide + [thioredoxin]-dithiol. This enzyme may serve as a scavenger, allowing the cell to utilize biotin sulfoxide as a biotin source. It reduces a spontaneous oxidation product of biotin, D-biotin D-sulfoxide (BSO or BDS), back to biotin. Also exhibits methionine-(S)-sulfoxide (Met-S-SO) reductase activity, acting specifically on the (S) enantiomer in the free, but not the protein-bound form. It thus plays a role in assimilation of oxidized methionines. This is Biotin sulfoxide reductase (bisC) from Escherichia coli (strain K12).